We begin with the raw amino-acid sequence, 310 residues long: Aspartate carbamoyltransferase catalytic subunit 3 (310 aa).

The carbamoyl phosphate site is built by Arg-55 and Thr-56. Lys-85 contributes to the L-aspartate binding site. Positions 106, 134, and 137 each coordinate carbamoyl phosphate. L-aspartate-binding residues include Arg-167 and Arg-228. Carbamoyl phosphate contacts are provided by Leu-266 and Pro-267.

This sequence belongs to the aspartate/ornithine carbamoyltransferase superfamily. ATCase family. As to quaternary structure, heterododecamer (2C3:3R2) of six catalytic PyrB chains organized as two trimers (C3), and six regulatory PyrI chains organized as three dimers (R2).

It catalyses the reaction carbamoyl phosphate + L-aspartate = N-carbamoyl-L-aspartate + phosphate + H(+). The protein operates within pyrimidine metabolism; UMP biosynthesis via de novo pathway; (S)-dihydroorotate from bicarbonate: step 2/3. Catalyzes the condensation of carbamoyl phosphate and aspartate to form carbamoyl aspartate and inorganic phosphate, the committed step in the de novo pyrimidine nucleotide biosynthesis pathway. The sequence is that of Aspartate carbamoyltransferase catalytic subunit 3 from Shewanella halifaxensis (strain HAW-EB4).